We begin with the raw amino-acid sequence, 162 residues long: Disulfide bond formation protein B (162 aa).

Residues 1-8 lie on the Cytoplasmic side of the membrane; sequence MTPLFRKA. The helical transmembrane segment at 9–25 threads the bilayer; that stretch reads VWLLFAVSVCAFAGSLA. Topologically, residues 26–43 are periplasmic; sequence AQYVLGMEPCVLCISQRL. A disulfide bridge links cysteine 35 with cysteine 38. Residues 44–60 traverse the membrane as a helical segment; that stretch reads CVLATALCTAIVLMCRP. The Cytoplasmic segment spans residues 61–67; that stretch reads RRRAGGL. Residues 68 to 85 traverse the membrane as a helical segment; sequence FGAVFISIPAVTGISVAA. Residues 86 to 141 lie on the Periplasmic side of the membrane; sequence YQLWLQSLPPGTAPSCGAPWTFRLKGWPLFDWFEPVVRGFGNCAEPDYLLGIALPV. Cysteines 101 and 128 form a disulfide. Residues 142 to 160 traverse the membrane as a helical segment; it reads WSVAYFLAVVLTVWWAWAR. At 161–162 the chain is on the cytoplasmic side; the sequence is AK.

It belongs to the DsbB family.

It is found in the cell inner membrane. Required for disulfide bond formation in some periplasmic proteins. Acts by oxidizing the DsbA protein. This chain is Disulfide bond formation protein B, found in Neisseria meningitidis serogroup B (strain ATCC BAA-335 / MC58).